A 157-amino-acid chain; its full sequence is Arginine repressor (157 aa).

The protein belongs to the ArgR family.

The protein localises to the cytoplasm. The protein operates within amino-acid biosynthesis; L-arginine biosynthesis [regulation]. Functionally, regulates arginine biosynthesis genes. This chain is Arginine repressor, found in Bacteroides fragilis (strain ATCC 25285 / DSM 2151 / CCUG 4856 / JCM 11019 / LMG 10263 / NCTC 9343 / Onslow / VPI 2553 / EN-2).